We begin with the raw amino-acid sequence, 218 residues long: UPF0502 protein VS_II0353 (218 aa).

The protein belongs to the UPF0502 family.

The chain is UPF0502 protein VS_II0353 from Vibrio atlanticus (strain LGP32) (Vibrio splendidus (strain Mel32)).